Reading from the N-terminus, the 306-residue chain is SDS degradation transcriptional activation protein (306 aa).

The HTH lysR-type domain maps to 1–59 (MNDLRQLRHFVALAEHGHFARAAEAVNLSQPALSRSIQALENGLGCRLLDRGPRQVSLT). The segment at residues 19–38 (FARAAEAVNLSQPALSRSIQ) is a DNA-binding region (H-T-H motif).

This sequence belongs to the LysR transcriptional regulatory family.

Activates the transcription of the sdsA gene for sodium dodecyl sulfate (SDS) degradation. The chain is SDS degradation transcriptional activation protein (sdsB) from Pseudomonas sp. (strain ATCC 19151).